The chain runs to 108 residues: Somatoliberin (108 aa).

Residues 1–20 form the signal peptide; the sequence is MPLWVFFFVILTLSNSSHCS. The propeptide occupies 21–31; that stretch reads PPPPLTLRMRR. At Leu-75 the chain carries Leucine amide. Residues 78 to 108 constitute a propeptide that is removed on maturation; it reads QVDSMWAEQKQMELESILVALLQKHSRNSQG.

The protein belongs to the glucagon family.

Its subcellular location is the secreted. In terms of biological role, GRF is released by the hypothalamus and acts on the adenohypophyse to stimulate the secretion of growth hormone. This chain is Somatoliberin (GHRH), found in Homo sapiens (Human).